The primary structure comprises 140 residues: Protein NrdI (140 aa).

It belongs to the NrdI family.

Probably involved in ribonucleotide reductase function. This Ruegeria sp. (strain TM1040) (Silicibacter sp.) protein is Protein NrdI.